The sequence spans 152 residues: Ribosome maturation factor RimP (152 aa).

This sequence belongs to the RimP family.

It localises to the cytoplasm. Its function is as follows. Required for maturation of 30S ribosomal subunits. The protein is Ribosome maturation factor RimP of Salmonella arizonae (strain ATCC BAA-731 / CDC346-86 / RSK2980).